The chain runs to 88 residues: UPF0237 protein SMU_72 (88 aa).

The ACT domain occupies 4–77; it reads IITVVGKDRT…ETLNVKINIQ (74 aa).

The protein belongs to the UPF0237 family. As to quaternary structure, homodimer.

The chain is UPF0237 protein SMU_72 from Streptococcus mutans serotype c (strain ATCC 700610 / UA159).